We begin with the raw amino-acid sequence, 240 residues long: MEENFKRILREKVSELNLSLDPLQEEKFYLYYMALKEWNRKINLTSLEGEEEIILKHFVDSLSCIIPIRNENIERIIDIGTGAGFPGIPIKIYDEKYKLTLLESQKKKILFLEELIKILELSDVEIVWDRAENLGKDPRYREQFDLALARGVAKPNIVLEYALPFVKTGGIFLGQATPNNLSEWENAQKVVGILGGKTEEKIEINFDNITRIFLKIRKINNTPEKYPRRPGIPEKRPLLP.

S-adenosyl-L-methionine contacts are provided by residues Gly80, Phe85, 131–132, and Arg150; that span reads AE.

This sequence belongs to the methyltransferase superfamily. RNA methyltransferase RsmG family.

Its subcellular location is the cytoplasm. Its function is as follows. Specifically methylates the N7 position of a guanine in 16S rRNA. This is Ribosomal RNA small subunit methyltransferase G from Dictyoglomus thermophilum (strain ATCC 35947 / DSM 3960 / H-6-12).